Reading from the N-terminus, the 510-residue chain is Bifunctional pantoate ligase/cytidylate kinase (510 aa).

The pantoate--beta-alanine ligase stretch occupies residues 1–276 (MKKVIIRKTE…CGETRLIDHV (276 aa)). 29–36 (MGNLHNGH) lines the ATP pocket. Catalysis depends on histidine 36, which acts as the Proton donor. (R)-pantoate is bound at residue glutamine 61. Position 61 (glutamine 61) interacts with beta-alanine. 150 to 153 (GEKD) is a binding site for ATP. Residue glutamine 156 coordinates (R)-pantoate. 187-190 (LSSR) is an ATP binding site. Residues 277-510 (FLMKRRPIIA…DKIPKETEIK (234 aa)) form a cytidylate kinase region.

In the N-terminal section; belongs to the pantothenate synthetase family. The protein in the C-terminal section; belongs to the cytidylate kinase family. Type 1 subfamily.

The protein resides in the cytoplasm. It carries out the reaction (R)-pantoate + beta-alanine + ATP = (R)-pantothenate + AMP + diphosphate + H(+). The enzyme catalyses CMP + ATP = CDP + ADP. It catalyses the reaction dCMP + ATP = dCDP + ADP. The protein operates within cofactor biosynthesis; (R)-pantothenate biosynthesis; (R)-pantothenate from (R)-pantoate and beta-alanine: step 1/1. Functionally, catalyzes the condensation of pantoate with beta-alanine in an ATP-dependent reaction via a pantoyl-adenylate intermediate. In terms of biological role, catalyzes the transfer of a phosphate group from ATP to either CMP or dCMP to form CDP or dCDP and ADP, respectively. This Prochlorococcus marinus (strain MIT 9215) protein is Bifunctional pantoate ligase/cytidylate kinase.